We begin with the raw amino-acid sequence, 264 residues long: 5'-nucleotidase SurE (264 aa).

The a divalent metal cation site is built by aspartate 10, aspartate 11, serine 43, and asparagine 99.

This sequence belongs to the SurE nucleotidase family. A divalent metal cation serves as cofactor.

Its subcellular location is the cytoplasm. It catalyses the reaction a ribonucleoside 5'-phosphate + H2O = a ribonucleoside + phosphate. In terms of biological role, nucleotidase that shows phosphatase activity on nucleoside 5'-monophosphates. The chain is 5'-nucleotidase SurE from Methanococcus vannielii (strain ATCC 35089 / DSM 1224 / JCM 13029 / OCM 148 / SB).